A 130-amino-acid chain; its full sequence is Small ribosomal subunit protein uS9 (130 aa).

The protein belongs to the universal ribosomal protein uS9 family.

The sequence is that of Small ribosomal subunit protein uS9 from Neisseria meningitidis serogroup C (strain 053442).